We begin with the raw amino-acid sequence, 102 residues long: Large ribosomal subunit protein bL21 (102 aa).

Belongs to the bacterial ribosomal protein bL21 family. As to quaternary structure, part of the 50S ribosomal subunit. Contacts protein L20.

Functionally, this protein binds to 23S rRNA in the presence of protein L20. This is Large ribosomal subunit protein bL21 from Staphylococcus haemolyticus (strain JCSC1435).